We begin with the raw amino-acid sequence, 331 residues long: Anthranilate phosphoribosyltransferase (331 aa).

5-phospho-alpha-D-ribose 1-diphosphate-binding positions include Gly79, 82-83 (GD), Thr87, 89-92 (NIST), 107-115 (KHGNYGATS), and Ala119. Gly79 serves as a coordination point for anthranilate. Mg(2+) is bound at residue Ser91. Asn110 serves as a coordination point for anthranilate. Residue Arg165 coordinates anthranilate. Residues Asp223 and Glu224 each contribute to the Mg(2+) site.

The protein belongs to the anthranilate phosphoribosyltransferase family. Homodimer. The cofactor is Mg(2+).

It catalyses the reaction N-(5-phospho-beta-D-ribosyl)anthranilate + diphosphate = 5-phospho-alpha-D-ribose 1-diphosphate + anthranilate. It participates in amino-acid biosynthesis; L-tryptophan biosynthesis; L-tryptophan from chorismate: step 2/5. Its function is as follows. Catalyzes the transfer of the phosphoribosyl group of 5-phosphorylribose-1-pyrophosphate (PRPP) to anthranilate to yield N-(5'-phosphoribosyl)-anthranilate (PRA). The sequence is that of Anthranilate phosphoribosyltransferase from Phocaeicola vulgatus (strain ATCC 8482 / DSM 1447 / JCM 5826 / CCUG 4940 / NBRC 14291 / NCTC 11154) (Bacteroides vulgatus).